A 305-amino-acid chain; its full sequence is Peroxisome assembly protein 26 (305 aa).

The disordered stretch occupies residues 1 to 25 (MKSDCSTSAAPFRGLGGPLRSSEPV). The Cytoplasmic portion of the chain corresponds to 1–246 (MKSDCSTSAA…RQLWDSAVSH (246 aa)). The helical; Signal-anchor for type II membrane protein transmembrane segment at 247-267 (FFSLPFKKSLLAALILCLLVV) threads the bilayer. The Peroxisomal matrix portion of the chain corresponds to 268–305 (RFDPASPSSLPSLYKLAQLFRWIRKAASSRLYQLRIRD).

This sequence belongs to the peroxin-26 family. As to quaternary structure, interacts (via its cytoplasmic domain) with PEX6; interaction is direct and is ATP-dependent. Interacts with PEX1; interaction is indirect and is mediated via interaction with PEX6.

It localises to the peroxisome membrane. Its function is as follows. Peroxisomal docking factor that anchors PEX1 and PEX6 to peroxisome membranes. PEX26 is therefore required for the formation of the PEX1-PEX6 AAA ATPase complex, a complex that mediates the extraction of the PEX5 receptor from peroxisomal membrane. The protein is Peroxisome assembly protein 26 (PEX26) of Macaca fascicularis (Crab-eating macaque).